The chain runs to 184 residues: Probable cobalt-precorrin-6B C(15)-methyltransferase (decarboxylating) (184 aa).

Residues T12, 36–40 (GCGTG), D59, and A87 each bind S-adenosyl-L-methionine.

It belongs to the methyltransferase superfamily. Archaeal-type CbiT family.

The catalysed reaction is Co-precorrin-6B + S-adenosyl-L-methionine = Co-precorrin-7 + S-adenosyl-L-homocysteine + CO2. Its pathway is cofactor biosynthesis; adenosylcobalamin biosynthesis; cob(II)yrinate a,c-diamide from sirohydrochlorin (anaerobic route): step 8/10. Functionally, catalyzes the methylation of C-15 in cobalt-precorrin-6B followed by the decarboxylation of C-12 to form cobalt-precorrin-7. The chain is Probable cobalt-precorrin-6B C(15)-methyltransferase (decarboxylating) from Methanosarcina acetivorans (strain ATCC 35395 / DSM 2834 / JCM 12185 / C2A).